The primary structure comprises 282 residues: Undecaprenyl-diphosphatase (282 aa).

5 helical membrane-spanning segments follow: residues 96-116, 123-143, 198-218, 229-249, and 260-280; these read WMVI…KDII, MWIT…AEKW, FLLA…DAFA, QLAV…AWLL, and FAAY…TGML.

It belongs to the UppP family.

It localises to the cell membrane. The catalysed reaction is di-trans,octa-cis-undecaprenyl diphosphate + H2O = di-trans,octa-cis-undecaprenyl phosphate + phosphate + H(+). Its function is as follows. Catalyzes the dephosphorylation of undecaprenyl diphosphate (UPP). Confers resistance to bacitracin. The polypeptide is Undecaprenyl-diphosphatase (Corynebacterium diphtheriae (strain ATCC 700971 / NCTC 13129 / Biotype gravis)).